The primary structure comprises 493 residues: Transcript termination protein A18 (493 aa).

The 157-residue stretch at 100 to 256 (MIESKRPLYI…NSIINIAKLS (157 aa)) folds into the Helicase ATP-binding domain. 113-120 (LACGFGKT) is a binding site for ATP. The DESH box signature appears at 206–209 (DESH).

This sequence belongs to the helicase family. Poxviruses subfamily. Interacts with G2. Might be part of a transcription complex composed at least of G2, A18, and H5.

It localises to the virion. DNA helicase which seems to act as a postreplicative transcription termination factor. Involved in ATP-dependent release of nascent RNA. Forms a stable complex with single-stranded DNA, and to a lesser extent RNA. In Vaccinia virus (strain Tian Tan) (VACV), this protein is Transcript termination protein A18.